Here is a 242-residue protein sequence, read N- to C-terminus: Ribosomal RNA small subunit methyltransferase G (242 aa).

Residues G79, 130 to 131, and Q149 each bind S-adenosyl-L-methionine; that span reads VE.

It belongs to the methyltransferase superfamily. RNA methyltransferase RsmG family.

It is found in the cytoplasm. In terms of biological role, specifically methylates the N7 position of a guanine in 16S rRNA. The protein is Ribosomal RNA small subunit methyltransferase G of Mycoplasmoides gallisepticum (strain R(low / passage 15 / clone 2)) (Mycoplasma gallisepticum).